The primary structure comprises 121 residues: UPF0738 protein RBAM_011600 (121 aa).

Belongs to the UPF0738 family.

This chain is UPF0738 protein RBAM_011600, found in Bacillus velezensis (strain DSM 23117 / BGSC 10A6 / LMG 26770 / FZB42) (Bacillus amyloliquefaciens subsp. plantarum).